Here is a 231-residue protein sequence, read N- to C-terminus: Ion-translocating oxidoreductase complex subunit E (231 aa).

The next 6 helical transmembrane spans lie at 18–38 (ALVQ…ATNA), 39–59 (LGLG…ISTL), 63–83 (TPSE…VSAV), 86–106 (LINA…PLIV), 125–145 (ALSA…MFVL), and 182–202 (PFLL…MLAG).

This sequence belongs to the NqrDE/RnfAE family. The complex is composed of six subunits: RsxA, RsxB, RsxC, RsxD, RsxE and RsxG.

The protein resides in the cell inner membrane. Functionally, part of a membrane-bound complex that couples electron transfer with translocation of ions across the membrane. Required to maintain the reduced state of SoxR. The chain is Ion-translocating oxidoreductase complex subunit E from Escherichia coli O6:K15:H31 (strain 536 / UPEC).